The sequence spans 206 residues: Small ribosomal subunit protein uS4 (206 aa).

In terms of domain architecture, S4 RNA-binding spans 96–156; it reads CRLDNVVYRM…EKAKNQLRIV (61 aa).

This sequence belongs to the universal ribosomal protein uS4 family. In terms of assembly, part of the 30S ribosomal subunit. Contacts protein S5. The interaction surface between S4 and S5 is involved in control of translational fidelity.

Its function is as follows. One of the primary rRNA binding proteins, it binds directly to 16S rRNA where it nucleates assembly of the body of the 30S subunit. With S5 and S12 plays an important role in translational accuracy. The chain is Small ribosomal subunit protein uS4 from Pseudomonas savastanoi pv. phaseolicola (strain 1448A / Race 6) (Pseudomonas syringae pv. phaseolicola (strain 1448A / Race 6)).